A 516-amino-acid polypeptide reads, in one-letter code: Adenine DNA glycosylase (516 aa).

Basic residues predominate over residues 1-23 (MKKLRASVRSHKKQPANHKRRGK). The segment at 1 to 38 (MKKLRASVRSHKKQPANHKRRGKCALSSSQAKPSGLDG) is disordered. Glutamate 105 functions as the Proton donor/acceptor in the catalytic mechanism. [4Fe-4S] cluster is bound by residues cysteine 261, cysteine 268, cysteine 271, and cysteine 277. In terms of domain architecture, Nudix hydrolase spans 335–467 (PREEYSATCV…AMKKVFRVYE (133 aa)). The Nudix box motif lies at 376–398 (VTLEPSGQHQHKALLQELQHWSA). The segment at 474-516 (CKGSKRPQVCTPSSRKKPSRGQQVLDRFFQRHIPTHKPNSTTQ) is disordered.

This sequence belongs to the Nth/MutY family. Requires [4Fe-4S] cluster as cofactor. As to expression, expressed in brain, spleen, heart, liver and kidney.

The protein localises to the nucleus. It localises to the mitochondrion. The catalysed reaction is Hydrolyzes free adenine bases from 7,8-dihydro-8-oxoguanine:adenine mismatched double-stranded DNA, leaving an apurinic site.. In terms of biological role, involved in oxidative DNA damage repair. Initiates repair of A*oxoG to C*G by removing the inappropriately paired adenine base from the DNA backbone. Possesses both adenine and 2-OH-A DNA glycosylase activities. The protein is Adenine DNA glycosylase (Mutyh) of Rattus norvegicus (Rat).